The sequence spans 495 residues: Dipeptide and tripeptide permease A (495 aa).

Residues 1–20 (MTTSALNPLRQPKPFYLIFS) lie on the Cytoplasmic side of the membrane. The chain crosses the membrane as a helical span at residues 21–41 (IEFWERFGFYGLQGILAVYLV). Residues 42-51 (KALGLREADS) are Periplasmic-facing. Residues 52–72 (FTLFSSFIALVYGLIAVGGWL) traverse the membrane as a helical segment. Over 73–81 (GDKVLGTKR) the chain is Cytoplasmic. Transmembrane regions (helical) follow at residues 82-102 (TILL…ASSE) and 103-123 (HISL…LFKA). Residues 124–145 (NPSSLLSKCYEENDPRLDGAFT) are Periplasmic-facing. The helical transmembrane segment at 146 to 166 (MYYMAINIGSLLSMLATPWLA) threads the bilayer. Residues 167-171 (DQFGY) lie on the Cytoplasmic side of the membrane. The helical transmembrane segment at 172-192 (AHAFALSVVGMLITVANFILM) threads the bilayer. The Periplasmic portion of the chain corresponds to 193–209 (QGWVKNYGSDADFRTPR). The chain crosses the membrane as a helical span at residues 210 to 230 (LSTWLAVLAGVVAACAAAALL). At 231–232 (LK) the chain is on the cytoplasmic side. Residues 233-253 (HEIIANVVLAVLSIGVVGLYV) traverse the membrane as a helical segment. The Periplasmic portion of the chain corresponds to 254–266 (KETLLLKGAERKK). Residues 267-287 (MIVAAILMLQATVFFVLYNQM) form a helical membrane-spanning segment. The Cytoplasmic segment spans residues 288–312 (PLSLNFFAIHNTEHMLFGIPVQPEQ). A helical transmembrane segment spans residues 313–333 (FQSLNPFWIMLASPLLALCYN). Topologically, residues 334–344 (KLGNRLPMPHK) are periplasmic. A helical transmembrane segment spans residues 345–365 (FAIGMVLCAGAFLVLPLGAKY). The Cytoplasmic portion of the chain corresponds to 366 to 375 (ANAQGLVSSN). A helical transmembrane segment spans residues 376 to 396 (WMVLSYLLQSVGELLISGLGL). Residues 397–409 (AMVAQLVPQRLMG) are Periplasmic-facing. Residues 410 to 430 (FIMGAWFLTSAASSVIAGWVA) traverse the membrane as a helical segment. Residues 431 to 451 (GLTAAPDNVTNPLATLEIYSR) lie on the Cytoplasmic side of the membrane. The helical transmembrane segment at 452–472 (VFTQIGVVTGVIAVVTIIIAP) threads the bilayer. The Periplasmic portion of the chain corresponds to 473-495 (WLHRMTLDEKPAHPEHEMALDAR).

The protein belongs to the major facilitator superfamily. Proton-dependent oligopeptide transporter (POT/PTR) (TC 2.A.17) family. DtpA subfamily.

It is found in the cell inner membrane. In terms of biological role, proton-dependent permease that transports di- and tripeptides. In Chromobacterium violaceum (strain ATCC 12472 / DSM 30191 / JCM 1249 / CCUG 213 / NBRC 12614 / NCIMB 9131 / NCTC 9757 / MK), this protein is Dipeptide and tripeptide permease A.